Consider the following 537-residue polypeptide: 5,6-dihydroxyindole-2-carboxylic acid oxidase (537 aa).

Positions Met1 to Ala24 are cleaved as a signal peptide. The Lumenal, melanosome segment spans residues Gln25–Glu477. Disulfide bonds link Cys30–Cys41, Cys42–Cys65, Cys56–Cys99, Cys101–Cys110, and Cys113–Cys122. N-linked (GlcNAc...) asparagine glycosylation is found at Asn96 and Asn104. Asn181 carries N-linked (GlcNAc...) asparagine glycosylation. Zn(2+) contacts are provided by His192, His215, and His224. 2 disulfide bridges follow: Cys258/Cys261 and Cys290/Cys303. Asn304 and Asn350 each carry an N-linked (GlcNAc...) asparagine glycan. 2 residues coordinate Zn(2+): His377 and His381. Asn385 carries N-linked (GlcNAc...) asparagine glycosylation. His404 contributes to the Zn(2+) binding site. A helical membrane pass occupies residues Ile478–Ile501. Residues Arg502 to Val537 lie on the Cytoplasmic side of the membrane.

The protein belongs to the tyrosinase family. Monomer. Interacts with ATP7A. Interacts with SLC45A2. The cofactor is Cu(2+). Zn(2+) serves as cofactor. Glycosylated. Pigment cells.

The protein resides in the melanosome membrane. It carries out the reaction 2 5,6-dihydroxyindole-2-carboxylate + O2 = 2 indole-5,6-quinone-2-carboxylate + 2 H2O. The protein operates within pigment biosynthesis; melanin biosynthesis. The activity depends critically on the nature of the bound metal ion. Catalyzes the oxidation of 5,6-dihydroxyindole-2-carboxylic acid (DHICA) in the presence of bound Cu(2+) ions, but lacks activity in the presence of bound Zn(2+) ions. Plays a role in melanin biosynthesis. Catalyzes the oxidation of 5,6-dihydroxyindole-2-carboxylic acid (DHICA) into indole-5,6-quinone-2-carboxylic acid in the presence of bound Cu(2+) ions, but not in the presence of Zn(2+). May regulate or influence the type of melanin synthesized. Also to a lower extent, capable of hydroxylating tyrosine and producing melanin. The protein is 5,6-dihydroxyindole-2-carboxylic acid oxidase of Homo sapiens (Human).